The sequence spans 237 residues: Probable S-methyl-5'-thioinosine phosphorylase (237 aa).

Residues threonine 12 and 54-55 (RH) contribute to the phosphate site. Methionine 187 is a substrate binding site. Threonine 188 contacts phosphate. 211–213 (NWA) contacts substrate.

The protein belongs to the PNP/MTAP phosphorylase family. MTAP subfamily. Homotrimer.

It catalyses the reaction S-methyl-5'-thioinosine + phosphate = 5-(methylsulfanyl)-alpha-D-ribose 1-phosphate + hypoxanthine. Its pathway is purine metabolism; purine nucleoside salvage. Functionally, catalyzes the reversible phosphorylation of S-methyl-5'-thioinosine (MTI) to hypoxanthine and 5-methylthioribose-1-phosphate. Involved in the breakdown of S-methyl-5'-thioadenosine (MTA), a major by-product of polyamine biosynthesis. Catabolism of (MTA) occurs via deamination to MTI and phosphorolysis to hypoxanthine. This chain is Probable S-methyl-5'-thioinosine phosphorylase, found in Xylella fastidiosa (strain 9a5c).